The primary structure comprises 675 residues: Methionine--tRNA ligase (675 aa).

A 'HIGH' region motif is present at residues 15 to 25; it reads PYANGSIHLGH. Cys146, Cys149, Cys159, and Cys162 together coordinate Zn(2+). A 'KMSKS' region motif is present at residues 331–335; that stretch reads KMSKS. Lys334 contacts ATP. The region spanning 574–675 is the tRNA-binding domain; that stretch reads DFAKIDLRIA…EGAQPGMKVK (102 aa).

The protein belongs to the class-I aminoacyl-tRNA synthetase family. MetG type 1 subfamily. As to quaternary structure, homodimer. Zn(2+) is required as a cofactor.

The protein resides in the cytoplasm. It carries out the reaction tRNA(Met) + L-methionine + ATP = L-methionyl-tRNA(Met) + AMP + diphosphate. Is required not only for elongation of protein synthesis but also for the initiation of all mRNA translation through initiator tRNA(fMet) aminoacylation. The polypeptide is Methionine--tRNA ligase (Pseudoalteromonas atlantica (strain T6c / ATCC BAA-1087)).